The chain runs to 512 residues: Probable cytochrome P450 6d2 (512 aa).

C457 provides a ligand contact to heme.

It belongs to the cytochrome P450 family. Heme is required as a cofactor.

Its subcellular location is the endoplasmic reticulum membrane. It localises to the microsome membrane. May be involved in the metabolism of insect hormones and in the breakdown of synthetic insecticides. This is Probable cytochrome P450 6d2 (Cyp6d2) from Drosophila melanogaster (Fruit fly).